A 127-amino-acid chain; its full sequence is E3 ubiquitin-protein ligase PPP1R11 (127 aa).

Disordered stretches follow at residues 1 to 55 (MAEA…EHMG) and 70 to 127 (AFGE…PMQH). An N-acetylalanine modification is found at A2. A compositionally biased stretch (low complexity) spans 11 to 23 (ETVTETTVTVTTE). The segment covering 40-55 (KKVEWSSDTVDNEHMG) has biased composition (basic and acidic residues). The tract at residues 53–63 (HMGRRSSKCCC) is atypical RING finger domain 1. S74 and S75 each carry phosphoserine. T76 is subject to Phosphothreonine. S78 bears the Phosphoserine mark. Positions 86 to 95 (CGHTHCVRGH) are atypical RING finger domain 2. Positions 90–100 (HCVRGHRKGRR) are enriched in basic residues. Residues 103 to 127 (TPGPTPTTPPQPPDPSQPPPGPMQH) show a composition bias toward pro residues. A Phosphothreonine modification is found at T110.

In terms of assembly, interacts with TLR2 and UBE2D2. Post-translationally, auto-ubiquitinated.

The enzyme catalyses S-ubiquitinyl-[E2 ubiquitin-conjugating enzyme]-L-cysteine + [acceptor protein]-L-lysine = [E2 ubiquitin-conjugating enzyme]-L-cysteine + N(6)-ubiquitinyl-[acceptor protein]-L-lysine.. The protein operates within protein modification; protein ubiquitination. In terms of biological role, atypical E3 ubiquitin-protein ligase which ubiquitinates TLR2 at 'Lys-754' leading to its degradation by the proteasome. Plays a role in regulating inflammatory cytokine release and gram-positive bacterial clearance by functioning, in part, through the ubiquitination and degradation of TLR2. Inhibitor of protein phosphatase 1. The chain is E3 ubiquitin-protein ligase PPP1R11 (Ppp1r11) from Rattus norvegicus (Rat).